A 177-amino-acid polypeptide reads, in one-letter code: ATP synthase subunit delta (177 aa).

It belongs to the ATPase delta chain family. F-type ATPases have 2 components, F(1) - the catalytic core - and F(0) - the membrane proton channel. F(1) has five subunits: alpha(3), beta(3), gamma(1), delta(1), epsilon(1). F(0) has three main subunits: a(1), b(2) and c(10-14). The alpha and beta chains form an alternating ring which encloses part of the gamma chain. F(1) is attached to F(0) by a central stalk formed by the gamma and epsilon chains, while a peripheral stalk is formed by the delta and b chains.

It localises to the cell inner membrane. In terms of biological role, f(1)F(0) ATP synthase produces ATP from ADP in the presence of a proton or sodium gradient. F-type ATPases consist of two structural domains, F(1) containing the extramembraneous catalytic core and F(0) containing the membrane proton channel, linked together by a central stalk and a peripheral stalk. During catalysis, ATP synthesis in the catalytic domain of F(1) is coupled via a rotary mechanism of the central stalk subunits to proton translocation. Functionally, this protein is part of the stalk that links CF(0) to CF(1). It either transmits conformational changes from CF(0) to CF(1) or is implicated in proton conduction. This Cronobacter sakazakii (strain ATCC BAA-894) (Enterobacter sakazakii) protein is ATP synthase subunit delta.